The following is a 328-amino-acid chain: Biotin synthase (328 aa).

One can recognise a Radical SAM core domain in the interval Phe53–Arg282. [4Fe-4S] cluster contacts are provided by Cys71, Cys75, and Cys78. [2Fe-2S] cluster-binding residues include Ser115, Cys147, Cys207, and Arg277.

The protein belongs to the radical SAM superfamily. Biotin synthase family. In terms of assembly, homodimer. It depends on [4Fe-4S] cluster as a cofactor. [2Fe-2S] cluster is required as a cofactor.

It carries out the reaction (4R,5S)-dethiobiotin + (sulfur carrier)-SH + 2 reduced [2Fe-2S]-[ferredoxin] + 2 S-adenosyl-L-methionine = (sulfur carrier)-H + biotin + 2 5'-deoxyadenosine + 2 L-methionine + 2 oxidized [2Fe-2S]-[ferredoxin]. Its pathway is cofactor biosynthesis; biotin biosynthesis; biotin from 7,8-diaminononanoate: step 2/2. Catalyzes the conversion of dethiobiotin (DTB) to biotin by the insertion of a sulfur atom into dethiobiotin via a radical-based mechanism. The polypeptide is Biotin synthase (Desulforudis audaxviator (strain MP104C)).